The chain runs to 103 residues: UPF0145 protein BC_1816 (103 aa).

Belongs to the UPF0145 family.

In Bacillus cereus (strain ATCC 14579 / DSM 31 / CCUG 7414 / JCM 2152 / NBRC 15305 / NCIMB 9373 / NCTC 2599 / NRRL B-3711), this protein is UPF0145 protein BC_1816.